The following is a 612-amino-acid chain: Transcription factor ffsR (612 aa).

The span at 1–12 shows a compositional bias: polar residues; that stretch reads MDTLTAPTTQSE. The disordered stretch occupies residues 1-21; the sequence is MDTLTAPTTQSEQPPPPLTAS. A DNA-binding region (zn(2)-C6 fungal-type) is located at residues 28 to 60; the sequence is CDRCRSHKLRCNRDLMTSTNSPCQRCRKARVKC. Over residues 73 to 82 the composition is skewed to basic and acidic residues; it reads EELKNGENVH. Disordered stretches follow at residues 73 to 130, 154 to 249, and 451 to 470; these read EELK…SMSG, DGST…VTSS, and GQGP…TTTN. 3 stretches are compositionally biased toward polar residues: residues 92–103, 154–169, and 238–249; these read SHRTASTPSNHA, DGST…TNGS, and LTQQHPAGVTSS. Positions 458–470 are enriched in low complexity; sequence PSQGSSSRSTTTN.

The protein localises to the nucleus. In terms of biological role, transcription factor that specifically regulates the expression of the gene cluster that mediates the biosynthesis of the cytotoxic leucine-containing cytochalasans, including aspochalasin C, aspochalasin E, TMC-169, flavichalasine F, aspergillin PZ, aspochalasin M and flavichalasine G. The protein is Transcription factor ffsR of Aspergillus flavipes.